Here is a 150-residue protein sequence, read N- to C-terminus: Monooxygenase dmxR10 (150 aa).

This sequence belongs to the avfA family.

Its pathway is secondary metabolite biosynthesis. In terms of biological role, monooxygenase; part of the gene cluster that mediates the biosynthesis of the dimeric xanthones cryptosporioptides. The pathway begins with the synthesis of atrochrysone thioester by the polyketide synthase dmx-nrPKS. The atrochrysone carboxyl ACP thioesterase dmxR1 then breaks the thioester bond and releases the atrochrysone carboxylic acid from dmx-nrPKS. Atrochrysone carboxylic acid is decarboxylated by the decarboxylase dmxR15, and oxidized by the anthrone oxygenase dmxR16 to yield emodin. Emodin is then reduced to emodin hydroquinone by the oxidoreductase dmxR7. A-ring reduction by the short chain dehydrogenase dmxR18, dehydration by the scytalone dehydratase-like protein dmxR17 and probable spontaneous re-oxidation, results in overall deoxygenation to chrysophanol. Baeyer-Villiger oxidation by the Baeyer-Villiger monooxygenase (BVMO) dmxR6 then yields monodictylactone in equilibrium with monodictyphenone. In the case of the cryptosporioptides biosynthesis, monodictylactone is reduced at C-12 to an alcohol (by the short chain dehydrogenases dmxR12 or dmxR8) and hydroxylated at C-5 by dmxR9, yielding the electron-rich aromatic which could eliminate H(2)O to form the ortho-quinonemethide, followed by tautomerisation to paraquinone and complete the formal reduction to produce the 10-methylgroup. Conjugate addition of C-4a-OH to the resulting paraquinone by the monooxygenase dmxR10 then gives cyclohexadienone, which is then reduced at C-5 by the short chain dehydrogenase dmxR3 to give the dihydroxanthone. The 6,7-epoxide in the cryptosporioptides could be introduced by the cytochrome P450 monooxygenase dmxL3. The highly reducing PKS dmxL2 manufactures butyrate, which is further carboxylated by dmxL1 to form ethylmalonate. It is not yet clear whether the carboxylation occurs while the butyrate is attached to the ACP of dmxL2, but this unusual fungal metabolite could then be esterified to O-5 by the O-acetyltransferase dmxR13. Finally, dimerization performed by dmxR5 gives the observed dimers cryptosporioptides A, B and C as the final products of the pathway. The protein is Monooxygenase dmxR10 of Cryptosporiopsis sp. (strain 8999).